A 94-amino-acid chain; its full sequence is Protein S100-A1 (94 aa).

Gly2 carries the post-translational modification Blocked amino end (Gly). EF-hand domains lie at 13 to 48 (INVF…FLDA) and 50 to 85 (KDAD…LTVA). Ca(2+)-binding residues include Lys28, Glu33, Asp63, Asn65, Asp67, Glu69, and Glu74. S-nitrosocysteine is present on Cys86.

This sequence belongs to the S-100 family. As to quaternary structure, dimer of either two alpha chains, or two beta chains, or one alpha and one beta chain. Also forms heterodimers with S100P. Interacts with AGER. Interacts with CAPZA1. Interacts with FKBP4. Interacts with RYR1 and RYR2. Interacts with CACYBP in a calcium-dependent manner. Interacts with PPP5C (via TPR repeats); the interaction is calcium-dependent and modulates PPP5C activity. Interacts with ATP2A2 and PLN in a Ca(2+)-dependent manner. Interacts with mitochondrial F1-ATPase subunits ATP5F1A and ATP5F1B; these interactions increase F1-ATPase activity. Glutathionylated; glutathionylation increases affinity to calcium about 10-fold. In terms of tissue distribution, although predominant among the water-soluble brain proteins, S100 is also found in a variety of other tissues.

The protein localises to the cytoplasm. The protein resides in the sarcoplasmic reticulum. Its subcellular location is the mitochondrion. Functionally, small calcium binding protein that plays important roles in several biological processes such as Ca(2+) homeostasis, chondrocyte biology and cardiomyocyte regulation. In response to an increase in intracellular Ca(2+) levels, binds calcium which triggers conformational changes. These changes allow interactions with specific target proteins and modulate their activity. Regulates a network in cardiomyocytes controlling sarcoplasmic reticulum Ca(2+) cycling and mitochondrial function through interaction with the ryanodine receptors RYR1 and RYR2, sarcoplasmic reticulum Ca(2+)-ATPase/ATP2A2 and mitochondrial F1-ATPase. Facilitates diastolic Ca(2+) dissociation and myofilament mechanics in order to improve relaxation during diastole. The sequence is that of Protein S100-A1 (S100A1) from Bos taurus (Bovine).